We begin with the raw amino-acid sequence, 427 residues long: Serine--tRNA ligase (427 aa).

230–232 is an L-serine binding site; it reads TSE. 261–263 contributes to the ATP binding site; the sequence is RSE. E284 is an L-serine binding site. 348-351 is a binding site for ATP; sequence EISS. L-serine is bound at residue S384.

It belongs to the class-II aminoacyl-tRNA synthetase family. Type-1 seryl-tRNA synthetase subfamily. As to quaternary structure, homodimer. The tRNA molecule binds across the dimer.

It is found in the cytoplasm. It catalyses the reaction tRNA(Ser) + L-serine + ATP = L-seryl-tRNA(Ser) + AMP + diphosphate + H(+). The enzyme catalyses tRNA(Sec) + L-serine + ATP = L-seryl-tRNA(Sec) + AMP + diphosphate + H(+). It functions in the pathway aminoacyl-tRNA biosynthesis; selenocysteinyl-tRNA(Sec) biosynthesis; L-seryl-tRNA(Sec) from L-serine and tRNA(Sec): step 1/1. Functionally, catalyzes the attachment of serine to tRNA(Ser). Is also able to aminoacylate tRNA(Sec) with serine, to form the misacylated tRNA L-seryl-tRNA(Sec), which will be further converted into selenocysteinyl-tRNA(Sec). The polypeptide is Serine--tRNA ligase (Desulforapulum autotrophicum (strain ATCC 43914 / DSM 3382 / VKM B-1955 / HRM2) (Desulfobacterium autotrophicum)).